The following is an 84-amino-acid chain: uncharacterized protein (84 aa).

This is an uncharacterized protein from Saccharomyces cerevisiae (strain ATCC 204508 / S288c) (Baker's yeast).